The sequence spans 439 residues: Probable cinnamyl alcohol dehydrogenase 8C (439 aa).

Position 120 (Cys-120) interacts with Zn(2+). Residue Thr-122 coordinates NADP(+). Zn(2+)-binding residues include His-142, Glu-143, Cys-173, Cys-176, Cys-179, Cys-187, and Cys-239. NADP(+) is bound by residues Thr-243, 264-269, 287-292, Thr-327, Gly-351, and 374-376; these read GLGGLG, STSPGK, and NCV.

The protein belongs to the zinc-containing alcohol dehydrogenase family. As to quaternary structure, homodimer. Zn(2+) is required as a cofactor.

The enzyme catalyses (E)-cinnamyl alcohol + NADP(+) = (E)-cinnamaldehyde + NADPH + H(+). It carries out the reaction (E)-coniferol + NADP(+) = (E)-coniferaldehyde + NADPH + H(+). It catalyses the reaction (E)-sinapyl alcohol + NADP(+) = (E)-sinapaldehyde + NADPH + H(+). The catalysed reaction is (E)-4-coumaroyl alcohol + NADP(+) = (E)-4-coumaraldehyde + NADPH + H(+). The enzyme catalyses (E)-caffeyl alcohol + NADP(+) = (E)-caffeyl aldehyde + NADPH + H(+). The protein operates within aromatic compound metabolism; phenylpropanoid biosynthesis. In terms of biological role, involved in lignin biosynthesis. Catalyzes the final step specific for the production of lignin monomers. Catalyzes the NADPH-dependent reduction of coniferaldehyde, 5-hydroxyconiferaldehyde, sinapaldehyde, 4-coumaraldehyde and caffeyl aldehyde to their respective alcohols. The sequence is that of Probable cinnamyl alcohol dehydrogenase 8C from Oryza sativa subsp. japonica (Rice).